The following is an 83-amino-acid chain: Large ribosomal subunit protein uL23 (83 aa).

This sequence belongs to the universal ribosomal protein uL23 family. In terms of assembly, part of the 50S ribosomal subunit. Contacts protein L29.

Binds to 23S rRNA. One of the proteins that surrounds the polypeptide exit tunnel on the outside of the ribosome. The chain is Large ribosomal subunit protein uL23 from Thermoplasma volcanium (strain ATCC 51530 / DSM 4299 / JCM 9571 / NBRC 15438 / GSS1).